Consider the following 511-residue polypeptide: Coatomer subunit delta (511 aa).

Basic and acidic residues predominate over residues 168–177; it reads QARRDAERQG. The interval 168-188 is disordered; sequence QARRDAERQGKKAPGFGGFGS. Ser-223 bears the Phosphoserine mark. N6-acetyllysine is present on residues Lys-233 and Lys-241. At Ser-244 the chain carries Phosphoserine. Residues 271-511 form the MHD domain; it reads MESVHMKIEE…TFLVDKYEIL (241 aa). Residues Lys-309 and Lys-351 each carry the N6-acetyllysine modification. Ser-493 carries the phosphoserine modification.

It belongs to the adaptor complexes medium subunit family. Delta-COP subfamily. In terms of assembly, oligomeric complex that consists of at least the alpha, beta, beta', gamma, delta, epsilon and zeta subunits.

The protein resides in the cytoplasm. The protein localises to the golgi apparatus membrane. Its subcellular location is the cytoplasmic vesicle. It is found in the COPI-coated vesicle membrane. Functionally, the coatomer is a cytosolic protein complex that binds to dilysine motifs and reversibly associates with Golgi non-clathrin-coated vesicles, which further mediate biosynthetic protein transport from the ER, via the Golgi up to the trans Golgi network. Coatomer complex is required for budding from Golgi membranes, and is essential for the retrograde Golgi-to-ER transport of dilysine-tagged proteins. In mammals, the coatomer can only be recruited by membranes associated to ADP-ribosylation factors (ARFs), which are small GTP-binding proteins; the complex also influences the Golgi structural integrity, as well as the processing, activity, and endocytic recycling of LDL receptors. This chain is Coatomer subunit delta (Arcn1), found in Rattus norvegicus (Rat).